The chain runs to 162 residues: Heat shock protein beta-6 (162 aa).

Positions 1–72 are involved in stabilization of the HSPB1:HSBP6 heterodimer; sequence MEIPVPVQPS…PTAQVSTDSG (72 aa). Position 16 is a phosphoserine (Ser-16). The sHSP domain occupies 56-162; that stretch reads RAPSVALPTA…AQLPSPPAAK (107 aa). At Gln-66 the chain carries Deamidated glutamine. A Phosphoserine modification is found at Ser-157.

This sequence belongs to the small heat shock protein (HSP20) family. In terms of assembly, homodimer. Small heat shock proteins form high molecular mass oligomers containing variable number of monomers; these oligomers display a very flexible quaternary structure easily exchanging their subunits. Heterooligomer with HSPB1; formed through oligomerization of HSPB1:HSBP6 dimers; subunit exchange leads to formation of at least two different heterooligomeric complexes, differing in variable quantities of HSPB1 and HSPB6 homodimers in addition to HSPB1:HSPB6 heterodimers. Heterooligomer with CRYAB; large heterooligomers consist of CRYAB homodimers and HSPB5:HSPB6 heterodimers but lacking HSPB6 homodimers. Interacts with BAG3. Interacts (phosphorylated) with YWHAZ. Interacts with PDE4A and PDE4D; required for maintenance of the non-phosphorylated state of HSPB6 under basal conditions. Interacts with KDR. Interacts with PRKD1. Post-translationally, phosphorylated at Ser-16 by PKA and probably PKD1K; required to protect cardiomyocytes from apoptosis.

Its subcellular location is the cytoplasm. It is found in the nucleus. It localises to the secreted. Its function is as follows. Small heat shock protein which functions as a molecular chaperone probably maintaining denatured proteins in a folding-competent state. Seems to have versatile functions in various biological processes. Plays a role in regulating muscle function such as smooth muscle vasorelaxation and cardiac myocyte contractility. May regulate myocardial angiogenesis implicating KDR. Overexpression mediates cardioprotection and angiogenesis after induced damage. Stabilizes monomeric YWHAZ thereby supporting YWHAZ chaperone-like activity. The polypeptide is Heat shock protein beta-6 (Hspb6) (Mus musculus (Mouse)).